The primary structure comprises 829 residues: Periplasmic nitrate reductase (829 aa).

A signal peptide (tat-type signal) is located at residues 1 to 30 (MKMTRRAFVKANAAASAAAVAGITLPASAA). Residues 41–97 (ITWDKAPCRFCGTGCSVLVGTQNGKVVATQGDPEAPVNKGLNCIKGYFLSKIMYGQD) form the 4Fe-4S Mo/W bis-MGD-type domain. [4Fe-4S] cluster-binding residues include Cys48, Cys51, Cys55, and Cys83. Residues Lys85, Gln152, Asn177, Cys181, 214-221 (WGSNMAEM), 245-249 (STYYH), 264-266 (QSD), Met374, Gln378, Asn484, 510-511 (SD), Lys533, Asp560, and 718-727 (TGRVLEHWHT) contribute to the Mo-bis(molybdopterin guanine dinucleotide) site. Phe794 contacts substrate. Mo-bis(molybdopterin guanine dinucleotide)-binding residues include Asn802 and Lys819.

Belongs to the prokaryotic molybdopterin-containing oxidoreductase family. NasA/NapA/NarB subfamily. In terms of assembly, component of the periplasmic nitrate reductase NapAB complex composed of NapA and NapB. [4Fe-4S] cluster is required as a cofactor. It depends on Mo-bis(molybdopterin guanine dinucleotide) as a cofactor. Predicted to be exported by the Tat system. The position of the signal peptide cleavage has not been experimentally proven.

The protein resides in the periplasm. The catalysed reaction is 2 Fe(II)-[cytochrome] + nitrate + 2 H(+) = 2 Fe(III)-[cytochrome] + nitrite + H2O. In terms of biological role, catalytic subunit of the periplasmic nitrate reductase complex NapAB. Receives electrons from NapB and catalyzes the reduction of nitrate to nitrite. This Vibrio parahaemolyticus serotype O3:K6 (strain RIMD 2210633) protein is Periplasmic nitrate reductase.